The following is a 291-amino-acid chain: Sulfotransferase 1A1 (291 aa).

44-49 contributes to the 3'-phosphoadenylyl sulfate binding site; that stretch reads KSGTNW. 102–104 lines the substrate pocket; it reads KTH. The Proton acceptor role is filled by His104. 3'-phosphoadenylyl sulfate-binding positions include Arg126, Ser134, Tyr189, 223–228, and 251–255; these read TSFKKM and FMRKG. Ser134 carries the post-translational modification Phosphoserine.

Belongs to the sulfotransferase 1 family. As to quaternary structure, homodimer. Expressed in brain, colon, liver, and small intestine of mice colonized with B.ovatus and L.plantarum.

It localises to the cytoplasm. It carries out the reaction a phenol + 3'-phosphoadenylyl sulfate = an aryl sulfate + adenosine 3',5'-bisphosphate + H(+). It catalyses the reaction 17beta-estradiol + 3'-phosphoadenylyl sulfate = 17beta-estradiol 3-sulfate + adenosine 3',5'-bisphosphate + H(+). The enzyme catalyses 4-ethylphenol + 3'-phosphoadenylyl sulfate = 4-ethylphenyl sulfate + adenosine 3',5'-bisphosphate + H(+). The catalysed reaction is 4-nitrophenol + 3'-phosphoadenylyl sulfate = 4-nitrophenyl sulfate + adenosine 3',5'-bisphosphate. It carries out the reaction dopamine + 3'-phosphoadenylyl sulfate = dopamine 3-O-sulfate + adenosine 3',5'-bisphosphate + H(+). It catalyses the reaction dopamine + 3'-phosphoadenylyl sulfate = dopamine 4-O-sulfate + adenosine 3',5'-bisphosphate + H(+). The enzyme catalyses 3,3',5-triiodo-L-thyronine + 3'-phosphoadenylyl sulfate = 3,3',5-triiodo-L-thyronine sulfate + adenosine 3',5'-bisphosphate + H(+). The catalysed reaction is 3,3',5'-triiodo-L-thyronine + 3'-phosphoadenylyl sulfate = 3,3',5'-triiodo-L-thyronine sulfate + adenosine 3',5'-bisphosphate + H(+). It carries out the reaction 3,3'-diiodo-L-thyronine + 3'-phosphoadenylyl sulfate = 3,3'-diiodo-L-thyronine sulfate + adenosine 3',5'-bisphosphate + H(+). It catalyses the reaction L-thyroxine + 3'-phosphoadenylyl sulfate = L-thyroxine sulfate + adenosine 3',5'-bisphosphate + H(+). Sulfotransferase that utilizes 3'-phospho-5'-adenylyl sulfate (PAPS) as sulfonate donor to catalyze the sulfate conjugation of a wide variety of acceptor molecules bearing a hydroxyl or an amine group. Sulfonation increases the water solubility of most compounds, and therefore their renal excretion, but it can also result in bioactivation to form active metabolites. Displays broad substrate specificity for small phenolic compounds. Plays an important role in the sulfonation of endogenous molecules such as steroid hormones. Mediates also the metabolic activation of carcinogenic N-hydroxyarylamines leading to highly reactive intermediates capable of forming DNA adducts, potentially resulting in mutagenesis. May play a role in gut microbiota-host metabolic interaction. O-sulfonates 4-ethylphenol (4-EP), a dietary tyrosine-derived metabolite produced by gut bacteria. The product 4-EPS crosses the blood-brain barrier and may negatively regulate oligodendrocyte maturation and myelination, affecting the functional connectivity of different brain regions associated with the limbic system. Catalyzes the sulfate conjugation of dopamine. Catalyzes the sulfation of T4 (L-thyroxine/3,5,3',5'-tetraiodothyronine), T3 (3,5,3'-triiodothyronine), rT3 (3,3',5'-triiodothyronine) and 3,3'-T2 (3,3'-diiodothyronine), with a substrate preference of 3,3'-T2 &gt; rT3 &gt; T3 &gt; T4. In Mus musculus (Mouse), this protein is Sulfotransferase 1A1 (Sult1a1).